Reading from the N-terminus, the 300-residue chain is MKIKAKNIVKIYDQKLPSELKALDKVTTEINQGEFIAIIGQTGSGKTTFIQHMNALLLPDQGEVEYLYFDSKNQEKKLVVQKPRFFRKKLKFINEIRRRVGVVFQFAEYQLFEQTIEKDIIFGAVSMGTPKNEAKKIAAEIIELVGLDQSFLQKSPFELSGGQKRRVAIAGILAMDPDIIFFDEPTAGLDPQGTLKMLEILDTLYKKGKTIILATHDLDSVLEWTKRCIFFKDGRIIYDGDTYSILANNKFLIENKMLPTNLLNFREKLIKIGYPISNVRSVSELISEINMLIQKETNAD.

Positions 3–258 (IKAKNIVKIY…NKFLIENKML (256 aa)) constitute an ABC transporter domain. 40–47 (GQTGSGKT) is a binding site for ATP.

It belongs to the ABC transporter superfamily. Energy-coupling factor EcfA family. As to quaternary structure, forms a stable energy-coupling factor (ECF) transporter complex composed of 2 membrane-embedded substrate-binding proteins (S component), 2 ATP-binding proteins (A component) and 2 transmembrane proteins (T component).

It is found in the cell membrane. Its function is as follows. ATP-binding (A) component of a common energy-coupling factor (ECF) ABC-transporter complex. Unlike classic ABC transporters this ECF transporter provides the energy necessary to transport a number of different substrates. This is Energy-coupling factor transporter ATP-binding protein EcfA2 from Mesomycoplasma hyopneumoniae (strain 7448) (Mycoplasma hyopneumoniae).